The following is a 1071-amino-acid chain: Myosin IF heavy chain (1071 aa).

The Myosin motor domain maps to 40 to 736 (VGLTDMCFLE…TLFHFEELRQ (697 aa)). Residue 134–141 (GESGSGKT) coordinates ATP. Residues 610 to 632 (INDLIGKLNTCQPHYIRCIKSNE) form an actin-binding region. Positions 739-768 (LPSIVITIQRVWRGYKVRKWYKQELQRLRE) constitute an IQ domain. In terms of domain architecture, TH1 spans 870-1069 (SRKKEWDCRR…KGNTAIVYYN (200 aa)).

It belongs to the TRAFAC class myosin-kinesin ATPase superfamily. Myosin family. In terms of assembly, myosin I heavy chain is single-headed. Dimer of a heavy and a light chain. Inability to self-assemble into filaments.

Its function is as follows. Myosin is a protein that binds to actin and has ATPase activity that is activated by actin. The polypeptide is Myosin IF heavy chain (myoF) (Dictyostelium discoideum (Social amoeba)).